The primary structure comprises 478 residues: MVQLNQDFINSIAKDMPAHLTMDDFISYSSKPLRPSIRINTLKISSDEFVTLMAAKGWTLDPIPWCSDGFWVALDNEIQLGNTIEHIQGLFYIQEASSMLPPTALFDGLDNSSEYTILDMASAPGSKTTQMASLMDNKGLLVANEYSSSRVKVLHANVQRMGVYNTALTHFDARVFGEYLYHQFDAILLDAPCSGEGTIRKDPLALRNWSLEENASIIETQKALIESAFLALKTGGSLVYSTCALSRSENQEVCEHLMSCFPQAVEFQSLSELFPDADKSCTSEGFLHVWPQIYDSEGFFIAKVRKVADVERQKPLPKAQRNFPFTAANNKTKDELSHYFKHTFGISLPKDGLIMERDLEYWLFPAKMADFIGKMRFQRIGLKLADGLKKGFKVRHEAIMALSDKHNAIELNESQAIEYLMGRDIPLQDGGKPQGEVILTYHHCALGVAKHLGKRLKNNLPRELVRDKVISAKAKTEL.

S-adenosyl-L-methionine contacts are provided by residues 121–127 (ASAPGSK), Glu145, Asp172, and Asp190. The Nucleophile role is filled by Cys243.

Belongs to the class I-like SAM-binding methyltransferase superfamily. RsmB/NOP family.

It localises to the cytoplasm. The enzyme catalyses cytidine(1407) in 16S rRNA + S-adenosyl-L-methionine = 5-methylcytidine(1407) in 16S rRNA + S-adenosyl-L-homocysteine + H(+). Specifically methylates the cytosine at position 1407 (m5C1407) of 16S rRNA. The polypeptide is Ribosomal RNA small subunit methyltransferase F (Shewanella woodyi (strain ATCC 51908 / MS32)).